Reading from the N-terminus, the 101-residue chain is Histone H1-like protein EM6 (101 aa).

2 stretches are compositionally biased toward basic residues: residues 1–35 and 58–101; these read AKKR…HVRK and AKKK…RRRR. A disordered region spans residues 1-101; that stretch reads AKKRSRSRKR…SRTARSRRRR (101 aa). 4 tandem repeats follow at residues 3 to 4, 5 to 6, 7 to 8, and 9 to 10. Residues 3–22 form a 10 X 2 AA approximate tandem repeats of [SK]-R region; that stretch reads KRSRSRKRSASRKRSRSRKR. Residues 11–12 form a 5; approximate repeat; it reads SA. 5 consecutive repeat copies span residues 13–14, 15–16, 17–18, 19–20, and 21–22. A globular region spans residues 32-65; it reads HVRKALAAGMKNHLLAHPKGSNNFILAKKKAPRR.

Sperm.

The protein resides in the nucleus. It localises to the chromosome. The polypeptide is Histone H1-like protein EM6 (Ensis minor (Razor shell)).